A 711-amino-acid polypeptide reads, in one-letter code: Hydroperoxide isomerase ALOXE3 (711 aa).

Residues 2–119 (AVYRLCVTTG…TVELRPGTAR (118 aa)) form the PLAT domain. Positions 120–711 (TICQDSLPLL…PPLIENSVSI (592 aa)) constitute a Lipoxygenase domain. Residues histidine 408, histidine 413, histidine 588, asparagine 592, and isoleucine 711 each contribute to the Fe cation site.

It belongs to the lipoxygenase family. It depends on Fe cation as a cofactor. In terms of tissue distribution, predominantly expressed in skin.

It localises to the cytoplasm. It catalyses the reaction a hydroperoxyeicosatetraenoate = a hydroxy-epoxy-eicosatetraenoate. It carries out the reaction (12R)-hydroperoxy-(5Z,8Z,10E,14Z)-eicosatetraenoate = (8R)-hydroxy-(11R,12R)-epoxy-(5Z,9E,14Z)-eicosatrienoate. The enzyme catalyses (12S)-hydroperoxy-(5Z,8Z,10E,14Z)-eicosatetraenoate = (8R)-hydroxy-(11S,12S)-epoxy-(5Z,9E,14Z)-eicosatrienoate. The catalysed reaction is (12S)-hydroperoxy-(5Z,8Z,10E,14Z)-eicosatetraenoate = (10R)-hydroxy-(11S,12S)-epoxy-(5Z,8Z,14Z)-eicosatrienoate. It catalyses the reaction (15S)-hydroperoxy-(5Z,8Z,11Z,13E)-eicosatetraenoate = (13R)-hydroxy-(14S,15S)-epoxy-(5Z,8Z,11Z)-eicosatrienoate. It carries out the reaction (5S)-hydroperoxy-(6E,8Z,11Z,14Z)-eicosatetraenoate = 7R-hydroxy-5S,6S-epoxy-(8Z,11Z,14Z)-eicosatrienoate. The enzyme catalyses (13S)-hydroperoxy-(9Z,11E)-octadecadienoate = 11-hydroxy-(12S,13S)-epoxy-(9Z)-octadecenoate. The catalysed reaction is N-[omega-(9R)-hydroperoxy-(10E,12Z)-octadecadienoyloxy]acyl-beta-D-glucosyl-(1&lt;-&gt;1)-octadecasphing-4E-enine = a N-[omega-(9R,10R)-epoxy-(13R)-hydroxy-(11E)-octadecenoyloxy]acyl-beta-D-glucosyl-(1&lt;-&gt;1)-sphing-4E-enine. It catalyses the reaction a N-[omega-(9R)-hydroperoxy-(10E,12Z)-octadecadienoyloxy]-acylsphin-4E-enine = a N-[omega-(9R,10R)-epoxy-(13R)-hydroxy-(11E)-octadecenoyloxy]-acylsphing-4E-enine. It carries out the reaction a hydroperoxyeicosatetraenoate = an oxoeicosatetraenoate + H2O. The enzyme catalyses (12R)-hydroperoxy-(5Z,8Z,10E,14Z)-eicosatetraenoate = 12-oxo-(5Z,8Z,10E,14Z)-eicosatetraenoate + H2O. The catalysed reaction is (12S)-hydroperoxy-(5Z,8Z,10E,14Z)-eicosatetraenoate = 12-oxo-(5Z,8Z,10E,14Z)-eicosatetraenoate + H2O. It catalyses the reaction (15S)-hydroperoxy-(5Z,8Z,11Z,13E)-eicosatetraenoate = 15-oxo-(5Z,8Z,11Z,13E)-eicosatetraenoate + H2O. It carries out the reaction (13S)-hydroperoxy-(9Z,11E)-octadecadienoate = 13-oxo-(9Z,11E)-octadecadienoate + H2O. The enzyme catalyses (8S)-hydroperoxy-(5Z,9E,11Z,14Z)-eicosatetraenoate = (10R)-hydroxy-(8S,9S)-epoxy-(5Z,11Z,14Z)-eicosatrienoate. The catalysed reaction is (8R)-hydroperoxy-(5Z,9E,11Z,14Z)-eicosatetraenoate = 8-oxo-(5Z,9E,11Z,14Z)-eicosatetraenoate + H2O. It catalyses the reaction (8S)-hydroperoxy-(5Z,9E,11Z,14Z)-eicosatetraenoate = 8-oxo-(5Z,9E,11Z,14Z)-eicosatetraenoate + H2O. The protein operates within lipid metabolism; hydroperoxy eicosatetraenoic acid biosynthesis. It functions in the pathway lipid metabolism; sphingolipid metabolism. Its activity is regulated as follows. Lipoxygenase activity is activated by 13(S)-HPODE leading to an active free ferric enzyme. The lipoxygenase and hydroperoxide isomerase activities are in competition and are reciprocally regulated by oxygen. The oxygen reacts with an epoxyallylic radical intermediate leading to an epoxyallylic peroxyl radical, which, due to its limited reactivity within the enzyme active site, it dissociates and leaves the enzyme in the activated free ferric state. In terms of biological role, non-heme iron-containing lipoxygenase which is atypical in that it displays a prominent hydroperoxide isomerase activity and a reduced lipoxygenases activity. The hydroperoxide isomerase activity catalyzes the isomerization of hydroperoxides, derived from arachidonic and linoleic acid by ALOX12B, into hepoxilin-type epoxyalcohols and ketones. In presence of oxygen, oxygenates polyunsaturated fatty acids, including arachidonic acid, to produce fatty acid hydroperoxides. In the skin, acts downstream of ALOX12B on the linoleate moiety of esterified omega-hydroxyacyl-sphingosine (EOS) ceramides to produce an epoxy-ketone derivative, a crucial step in the conjugation of omega-hydroxyceramide to membrane proteins. Therefore plays a crucial role in the synthesis of corneocytes lipid envelope and the establishment of the skin barrier to water loss. In parallel, it may have a signaling function in barrier formation through the production of hepoxilins metabolites. Also plays a role in adipocyte differentiation through hepoxilin A3 and hepoxilin B3 production which in turn activate PPARG. Through the production of hepoxilins in the spinal cord, it may regulate inflammatory tactile allodynia. This is Hydroperoxide isomerase ALOXE3 from Homo sapiens (Human).